A 332-amino-acid polypeptide reads, in one-letter code: MPCPRLPWLRRHRTSQGSGPSSPSTVSAPNSPSRGEDEDAEEEEGDGTPGSGPILPPTSPMECLICVSPFDGIFKLPKRLDCGHVFCLECLARLSLATAGGGDAVACPMCRAPTRLAPRRGLPALPTQPGLLPRDARAPLPRQGSVRFDRRRGLLYLRPPPPSPGPRKSRTVRAPPPPPPLRLGRPLSRRLSLSSPAWAFNAAVALAVLVAAGLVVSGVYIFFLIPHVTNSGVRPQTVALAPENDFWVSPRPTPVAPWTHAWTRRPTKPDLDLDDTLPEATKDTPELEEATKDPVETQGIPDLPPDQTPKAEIDLNWNPKAQADGKKVQLQQ.

A disordered region spans residues 1 to 55 (MPCPRLPWLRRHRTSQGSGPSSPSTVSAPNSPSRGEDEDAEEEEGDGTPGSGPIL). The span at 15-27 (SQGSGPSSPSTVS) shows a compositional bias: low complexity. The span at 36–46 (EDEDAEEEEGD) shows a compositional bias: acidic residues. An RING-type zinc finger spans residues 63–111 (CLICVSPFDGIFKLPKRLDCGHVFCLECLARLSLATAGGGDAVACPMCR). Residues 121–187 (GLPALPTQPG…PPPLRLGRPL (67 aa)) form a disordered region. Residues 205-225 (ALAVLVAAGLVVSGVYIFFLI) form a helical membrane-spanning segment. Residues 259-332 (THAWTRRPTK…ADGKKVQLQQ (74 aa)) are disordered. 2 stretches are compositionally biased toward basic and acidic residues: residues 280-295 (ATKD…KDPV) and 323-332 (ADGKKVQLQQ).

The protein resides in the membrane. In Mus musculus (Mouse), this protein is RING finger protein 225.